Reading from the N-terminus, the 91-residue chain is Putative septation protein SpoVG (91 aa).

This sequence belongs to the SpoVG family.

In terms of biological role, could be involved in septation. This Caldanaerobacter subterraneus subsp. tengcongensis (strain DSM 15242 / JCM 11007 / NBRC 100824 / MB4) (Thermoanaerobacter tengcongensis) protein is Putative septation protein SpoVG.